The primary structure comprises 248 residues: PF03932 family protein CutC (248 aa).

Belongs to the CutC family. Homodimer.

The protein localises to the cytoplasm. This chain is PF03932 family protein CutC, found in Salmonella paratyphi A (strain AKU_12601).